The primary structure comprises 230 residues: 5'-methylthioadenosine/S-adenosylhomocysteine nucleosidase (230 aa).

The active-site Proton acceptor is the Glu12. Substrate is bound by residues Gly78, Ile153, and 174-175 (ME). The active-site Proton donor is Asp198.

The protein belongs to the PNP/UDP phosphorylase family. MtnN subfamily.

The catalysed reaction is S-adenosyl-L-homocysteine + H2O = S-(5-deoxy-D-ribos-5-yl)-L-homocysteine + adenine. It catalyses the reaction S-methyl-5'-thioadenosine + H2O = 5-(methylsulfanyl)-D-ribose + adenine. It carries out the reaction 5'-deoxyadenosine + H2O = 5-deoxy-D-ribose + adenine. It functions in the pathway amino-acid biosynthesis; L-methionine biosynthesis via salvage pathway; S-methyl-5-thio-alpha-D-ribose 1-phosphate from S-methyl-5'-thioadenosine (hydrolase route): step 1/2. Its function is as follows. Catalyzes the irreversible cleavage of the glycosidic bond in both 5'-methylthioadenosine (MTA) and S-adenosylhomocysteine (SAH/AdoHcy) to adenine and the corresponding thioribose, 5'-methylthioribose and S-ribosylhomocysteine, respectively. Also cleaves 5'-deoxyadenosine, a toxic by-product of radical S-adenosylmethionine (SAM) enzymes, into 5-deoxyribose and adenine. This chain is 5'-methylthioadenosine/S-adenosylhomocysteine nucleosidase, found in Shewanella pealeana (strain ATCC 700345 / ANG-SQ1).